Consider the following 363-residue polypeptide: NAD(P)H-quinone oxidoreductase subunit 1, chloroplastic (363 aa).

9 helical membrane passes run 30 to 50 (LVPI…IVWL), 98 to 118 (FSIG…VIPF), 129 to 149 (IGVF…LMSG), 165 to 185 (AAQS…ISLL), 203 to 223 (LWGW…ISSL), 248 to 268 (YSGI…LVSS), 269 to 289 (LFVT…IFVP), 300 to 320 (VFGT…FLFI), and 334 to 354 (DQLL…NLLL).

It belongs to the complex I subunit 1 family. In terms of assembly, NDH is composed of at least 16 different subunits, 5 of which are encoded in the nucleus.

The protein resides in the plastid. It is found in the chloroplast thylakoid membrane. It catalyses the reaction a plastoquinone + NADH + (n+1) H(+)(in) = a plastoquinol + NAD(+) + n H(+)(out). The catalysed reaction is a plastoquinone + NADPH + (n+1) H(+)(in) = a plastoquinol + NADP(+) + n H(+)(out). Functionally, NDH shuttles electrons from NAD(P)H:plastoquinone, via FMN and iron-sulfur (Fe-S) centers, to quinones in the photosynthetic chain and possibly in a chloroplast respiratory chain. The immediate electron acceptor for the enzyme in this species is believed to be plastoquinone. Couples the redox reaction to proton translocation, and thus conserves the redox energy in a proton gradient. The chain is NAD(P)H-quinone oxidoreductase subunit 1, chloroplastic from Oenothera elata subsp. hookeri (Hooker's evening primrose).